Consider the following 192-residue polypeptide: UPF0316 protein SSP0880 (192 aa).

A run of 3 helical transmembrane segments spans residues 8–28 (PWLM…CLTM), 40–60 (VAAI…GMVM), and 66–86 (IQNV…GMKI).

The protein belongs to the UPF0316 family.

It is found in the cell membrane. This chain is UPF0316 protein SSP0880, found in Staphylococcus saprophyticus subsp. saprophyticus (strain ATCC 15305 / DSM 20229 / NCIMB 8711 / NCTC 7292 / S-41).